A 440-amino-acid chain; its full sequence is Gap junction alpha-8 protein (440 aa).

Residues 2-12 (GDWSFLGNILE) lie within the membrane without spanning it. The Cytoplasmic segment spans residues 13-21 (EVNEHSTVI). Residues 22 to 42 (GRVWLTVLFIFRILILGTAAE) form a helical membrane-spanning segment. The Extracellular segment spans residues 43–71 (FVWGDEQSDFVCNTQQPGCENVCYDEAFP). 3 disulfides stabilise this stretch: cysteine 54-cysteine 201, cysteine 61-cysteine 195, and cysteine 65-cysteine 190. A helical transmembrane segment spans residues 72 to 92 (ISHIRLWVLQIIFVSTPSLMY). Residues 93 to 161 (VGHAVHHVRM…GTLLRTYVCH (69 aa)) are Cytoplasmic-facing. Residues 111–143 (AEELCQQSRSNGGERVPIAPDQASIRKSSSSSK) form a disordered region. A helical transmembrane segment spans residues 162–182 (IIFKTLFEVGFIVGHYFLYGF). The Extracellular portion of the chain corresponds to 183–210 (RILPLYRCSRWPCPNVVDCFVSRPTEKT). The chain crosses the membrane as a helical span at residues 211 to 231 (IFILFMLSVAFVSLFLNIMEM). The Cytoplasmic portion of the chain corresponds to 232 to 440 (SHLGMKGIRS…SRARSDDLTI (209 aa)). The interval 338–440 (VEREEPPIEE…SRARSDDLTI (103 aa)) is disordered. 2 stretches are compositionally biased toward basic and acidic residues: residues 353–364 (VGEKKQEAEKVA) and 374–399 (PDRE…EKVT). The span at 423 to 432 (LSRLSKASSR) shows a compositional bias: low complexity.

This sequence belongs to the connexin family. Alpha-type (group II) subfamily. In terms of assembly, a hemichannel or connexon is composed of a hexamer of connexins. A functional gap junction is formed by the apposition of two hemichannels. Forms heteromeric channels with GJA3. As to expression, detected in eye lens (at protein level). Eye lens.

It is found in the cell membrane. Its subcellular location is the cell junction. It localises to the gap junction. Functionally, structural component of eye lens gap junctions. Gap junctions are dodecameric channels that connect the cytoplasm of adjoining cells. They are formed by the docking of two hexameric hemichannels, one from each cell membrane. Small molecules and ions diffuse from one cell to a neighboring cell via the central pore. This Mus musculus (Mouse) protein is Gap junction alpha-8 protein (Gja8).